The chain runs to 198 residues: ATP-dependent Clp protease proteolytic subunit 2 (198 aa).

Ser-101 serves as the catalytic Nucleophile. The active site involves His-126.

It belongs to the peptidase S14 family. As to quaternary structure, fourteen ClpP subunits assemble into 2 heptameric rings which stack back to back to give a disk-like structure with a central cavity, resembling the structure of eukaryotic proteasomes.

The protein localises to the cytoplasm. It carries out the reaction Hydrolysis of proteins to small peptides in the presence of ATP and magnesium. alpha-casein is the usual test substrate. In the absence of ATP, only oligopeptides shorter than five residues are hydrolyzed (such as succinyl-Leu-Tyr-|-NHMec, and Leu-Tyr-Leu-|-Tyr-Trp, in which cleavage of the -Tyr-|-Leu- and -Tyr-|-Trp bonds also occurs).. In terms of biological role, cleaves peptides in various proteins in a process that requires ATP hydrolysis. Has a chymotrypsin-like activity. Plays a major role in the degradation of misfolded proteins. In Thermosynechococcus vestitus (strain NIES-2133 / IAM M-273 / BP-1), this protein is ATP-dependent Clp protease proteolytic subunit 2.